We begin with the raw amino-acid sequence, 373 residues long: Glutamine synthetase (373 aa).

Ala2 is subject to N-acetylalanine. Residues 2–25 are required for glutamine-induced ubiquitination by CRL4(CRBN) and proteasomal degradation; the sequence is ATSASSHLNKGIKQVYMSLPQGEK. An N6-acetyllysine mark is found at Lys11 and Lys14. One can recognise a GS beta-grasp domain in the interval 24–106; it reads EKVQAMYIWI…VFCEVFKYNR (83 aa). Tyr104 carries the post-translational modification Phosphotyrosine. A GS catalytic domain is found at 113–373; sequence LRHTCKRIMD…TGDEPFQYKN (261 aa). Glu134 contributes to the ATP binding site. Residues Glu134, Glu136, Glu196, and Glu203 each coordinate Mn(2+). Residue 203 to 208 coordinates ATP; it reads EFQIGP. 246 to 247 contributes to the L-glutamate binding site; that stretch reads NW. Residue His253 participates in Mn(2+) binding. Residues 255–257, Arg319, and Arg324 contribute to the ATP site; that span reads NFS. Arg319 lines the L-glutamate pocket. 336–338 contacts ADP; sequence YFE. Glu338 lines the Mn(2+) pocket. An L-glutamate-binding site is contributed by Arg340. Ser343 is modified (phosphoserine).

It belongs to the glutamine synthetase family. In terms of assembly, decamer; composed of two pentamers. Interacts with PALMD. Interacts with RHOJ. Interacts with BEST2; this interaction tethers a fraction of GLUL to the membrane, causing a decrease of cytosolic glutamine synthase (GS) activity and inhibits the chloride channel activity of BEST2 by affecting the gating at the aperture in the absence of intracellular glutamate. It depends on Mg(2+) as a cofactor. Mn(2+) is required as a cofactor. Post-translationally, palmitoylated; undergoes autopalmitoylation. In terms of processing, acetylated by EP300/p300; acetylation is stimulated by increased glutamine levels and promotes ubiquitin-mediated proteasomal degradation. Ubiquitinated by ZNRF1. Ubiquitinated by the DCX (DDB1-CUL4-X-box) E3 ubiquitin-protein ligase complex called CRL4(CRBN), leading to proteasomal degradation.

The protein resides in the cytoplasm. The protein localises to the cytosol. It localises to the microsome. It is found in the mitochondrion. Its subcellular location is the cell membrane. The catalysed reaction is L-glutamate + NH4(+) + ATP = L-glutamine + ADP + phosphate + H(+). It carries out the reaction L-cysteinyl-[protein] + hexadecanoyl-CoA = S-hexadecanoyl-L-cysteinyl-[protein] + CoA. Its activity is regulated as follows. Glutamine synthetase activity is inhibited by methionine sulfoximine (MSO). In terms of biological role, glutamine synthetase that catalyzes the ATP-dependent conversion of glutamate and ammonia to glutamine. Its role depends on tissue localization: in the brain, it regulates the levels of toxic ammonia and converts neurotoxic glutamate to harmless glutamine, whereas in the liver, it is one of the enzymes responsible for the removal of ammonia. Plays a key role in ammonium detoxification during erythropoiesis: the glutamine synthetase activity is required to remove ammonium generated by porphobilinogen deaminase (HMBS) during heme biosynthesis to prevent ammonium accumulation and oxidative stress. Essential for proliferation of fetal skin fibroblasts. Independently of its glutamine synthetase activity, required for endothelial cell migration during vascular development. Involved in angiogenesis by regulating membrane localization and activation of the GTPase RHOJ, possibly by promoting RHOJ palmitoylation. May act as a palmitoyltransferase for RHOJ: able to autopalmitoylate and then transfer the palmitoyl group to RHOJ. Plays a role in ribosomal 40S subunit biogenesis. Through the interaction with BEST2, inhibits BEST2 channel activity by affecting the gating at the aperture in the absence of intracellular L-glutamate, but sensitizes BEST2 to intracellular L-glutamate, which promotes the opening of BEST2 and thus relieves its inhibitory effect on BEST2. The polypeptide is Glutamine synthetase (Canis lupus familiaris (Dog)).